Here is a 506-residue protein sequence, read N- to C-terminus: MPDTAPQLRLYNTLTRTKEAFAPIDAKNVRMYVCGPTVYDFAHIGNARPVIVFDVLFRLLRHVYGAQHVTYARNITDVDDKINARAARDYPDLPFNEAIRKVTESTNAQFQADVTALGNLQPTVQPRATEHMDEMRAMIDRLVQRGVAYVAQDHVLFSPSAMNARKGPRYGALARRSLDEMLAGARVDVASYKRDEMDFVLWKPSKKGEPGWPSPAGIETLGRPGWHIECSAMSMAKLLEPFGGGLKCDDPERNQFDIHGGGIDLVFPHHENEIAQSCCALGTERMANIWMHNGFLQVEGQKMSKSLGNFITIRDVLNDGLPQLGEWGDNTVRDRWAGLAARLSMLQTHYREPINWTAQRLAESADELHRWYGLLRDEGFGAPEKLSHASAVAAALCDDLNSWAAITALRQAFKVRDVAALGEGMALMGLLDPYFVTASDVPIFARADVDASAIAARIAERLNFINAKNWAEADRIRDELLQEGVQLKDSKDPATGERITTWDVVG.

Cys34 contributes to the Zn(2+) binding site. The 'HIGH' region signature appears at 36 to 46; it reads PTVYDFAHIGN. Cys230, His269, and Glu273 together coordinate Zn(2+). The 'KMSKS' region signature appears at 302–306; that stretch reads KMSKS. An ATP-binding site is contributed by Lys305.

The protein belongs to the class-I aminoacyl-tRNA synthetase family. In terms of assembly, monomer. The cofactor is Zn(2+).

The protein resides in the cytoplasm. It carries out the reaction tRNA(Cys) + L-cysteine + ATP = L-cysteinyl-tRNA(Cys) + AMP + diphosphate. The chain is Cysteine--tRNA ligase from Brucella suis biovar 1 (strain 1330).